The sequence spans 121 residues: uncharacterized protein (121 aa).

The next 3 helical transmembrane spans lie at 2-22, 42-62, and 89-109; these read VFVTIIIIINISYNIYNIYTI, FICIYVCISGGNMPLWAYILF, and IFFAFCCHHIWSLLPHHLSIF.

It localises to the membrane. This is an uncharacterized protein from Saccharomyces cerevisiae (strain ATCC 204508 / S288c) (Baker's yeast).